The following is a 117-amino-acid chain: Large ribosomal subunit protein uL18 (117 aa).

This sequence belongs to the universal ribosomal protein uL18 family. As to quaternary structure, part of the 50S ribosomal subunit; part of the 5S rRNA/L5/L18/L25 subcomplex. Contacts the 5S and 23S rRNAs.

Its function is as follows. This is one of the proteins that bind and probably mediate the attachment of the 5S RNA into the large ribosomal subunit, where it forms part of the central protuberance. The polypeptide is Large ribosomal subunit protein uL18 (Francisella philomiragia subsp. philomiragia (strain ATCC 25017 / CCUG 19701 / FSC 153 / O#319-036)).